Here is a 298-residue protein sequence, read N- to C-terminus: Oligodendrocyte transcription factor 2 (298 aa).

Polar residues predominate over residues 1–13; sequence MDSDASLVSSRPS. 2 disordered regions span residues 1 to 60 and 79 to 102; these read MDSD…SAEL and SSSSSASSASSASSKKDKKQMTEP. The span at 26-41 shows a compositional bias: gly residues; sequence NKGGGGGGGGGGGFTG. A compositionally biased stretch (low complexity) spans 79–91; it reads SSSSSASSASSAS. Residues 106–160 enclose the bHLH domain; sequence QLRLKINSRERKRMHDLNIAMDGLREVMPYAHGPSVRKLSKIATLLLARNYILML.

The protein resides in the nucleus. Required for oligodendrocyte and motor neuron specification in the spinal cord. In Gallus gallus (Chicken), this protein is Oligodendrocyte transcription factor 2 (OLIG2).